The primary structure comprises 252 residues: Hydroxyacylglutathione hydrolase (252 aa).

Zn(2+) is bound by residues H54, H56, D58, H59, H111, D130, and H170.

This sequence belongs to the metallo-beta-lactamase superfamily. Glyoxalase II family. Monomer. Zn(2+) is required as a cofactor.

The catalysed reaction is an S-(2-hydroxyacyl)glutathione + H2O = a 2-hydroxy carboxylate + glutathione + H(+). It participates in secondary metabolite metabolism; methylglyoxal degradation; (R)-lactate from methylglyoxal: step 2/2. Functionally, thiolesterase that catalyzes the hydrolysis of S-D-lactoyl-glutathione to form glutathione and D-lactic acid. The chain is Hydroxyacylglutathione hydrolase from Francisella tularensis subsp. tularensis (strain FSC 198).